The chain runs to 289 residues: Protease HtpX homolog (289 aa).

2 helical membrane passes run 11-31 (AALF…IGAG) and 36-54 (APIW…YGYW). A Zn(2+)-binding site is contributed by His138. Residue Glu139 is part of the active site. Zn(2+) is bound at residue His142. 2 helical membrane-spanning segments follow: residues 153 to 173 (VAAA…FFGG) and 182 to 202 (LAMI…QMAI). A Zn(2+)-binding site is contributed by Glu207.

Belongs to the peptidase M48B family. Zn(2+) is required as a cofactor.

Its subcellular location is the cell membrane. The polypeptide is Protease HtpX homolog (Pseudarthrobacter chlorophenolicus (strain ATCC 700700 / DSM 12829 / CIP 107037 / JCM 12360 / KCTC 9906 / NCIMB 13794 / A6) (Arthrobacter chlorophenolicus)).